Here is a 116-residue protein sequence, read N- to C-terminus: MNAKKQSRIRRATRSRSKIRELRETRLCVNRTPRHIYAQIISPESDKVLASASTLDKDLRSGATGNIDAATAVGKLIAERAKAAGVTKVAFDRSGFKFHGRVKALADAARESGLEF.

This sequence belongs to the universal ribosomal protein uL18 family. In terms of assembly, part of the 50S ribosomal subunit; part of the 5S rRNA/L5/L18/L25 subcomplex. Contacts the 5S and 23S rRNAs.

This is one of the proteins that bind and probably mediate the attachment of the 5S RNA into the large ribosomal subunit, where it forms part of the central protuberance. This chain is Large ribosomal subunit protein uL18, found in Teredinibacter turnerae (strain ATCC 39867 / T7901).